We begin with the raw amino-acid sequence, 325 residues long: MVQEQMKLTGTLEGHTGWVTQIATYTRNDKTTVLSSSRDKTILVWDVDSVAPVDEGPIGRPVRSLTGHNHFVSDVVISSDGQFALSGSWDKTLRLWDLNQGVSTRQFISHTKDVLSVAFSADNRQIVSGSRDKSIKLWNTLAQCKYTITDDCHTDWVSTVRFSPSNRDPVIVSAGWDKVVKVWNLGNCRLKTNHIGHTGYVNTVTVSPDGSLCASGGKDGQAMLWDLNEGKHLYTLPGNDVINAMSFSPNRYWLCAAVGSSIKIWDLEDKKEIEELKPEIASSGSSRGSSPQCISLAWSQDGQTLFAGYTDNIIRVYQVSIRASN.

WD repeat units lie at residues 5 to 48, 58 to 99, 100 to 141, 143 to 186, 187 to 227, 228 to 268, and 269 to 320; these read QMKL…WDVD, IGRP…WDLN, QGVS…WNTL, QCKY…WNLG, NCRL…LWDL, NEGK…WDLE, and DKKE…YQVS.

This sequence belongs to the WD repeat G protein beta family. Ribosomal protein RACK1 subfamily.

Its function is as follows. Required for the expression of antimicrobial peptide nlp-29 in response to fungal infection or physical injury. This is Small ribosomal subunit protein RACK1 (rack-1) from Caenorhabditis elegans.